Here is a 299-residue protein sequence, read N- to C-terminus: 4-diphosphocytidyl-2-C-methyl-D-erythritol kinase (299 aa).

Lys-10 is a catalytic residue. 96 to 106 (PVAGGMAGGSA) lines the ATP pocket. Asp-138 is an active-site residue.

It belongs to the GHMP kinase family. IspE subfamily.

It carries out the reaction 4-CDP-2-C-methyl-D-erythritol + ATP = 4-CDP-2-C-methyl-D-erythritol 2-phosphate + ADP + H(+). Its pathway is isoprenoid biosynthesis; isopentenyl diphosphate biosynthesis via DXP pathway; isopentenyl diphosphate from 1-deoxy-D-xylulose 5-phosphate: step 3/6. Catalyzes the phosphorylation of the position 2 hydroxy group of 4-diphosphocytidyl-2C-methyl-D-erythritol. This chain is 4-diphosphocytidyl-2-C-methyl-D-erythritol kinase, found in Streptomyces coelicolor (strain ATCC BAA-471 / A3(2) / M145).